The following is a 126-amino-acid chain: Aspartate 1-decarboxylase 2 (126 aa).

S25 acts as the Schiff-base intermediate with substrate; via pyruvic acid in catalysis. S25 bears the Pyruvic acid (Ser) mark. Position 57 (T57) interacts with substrate. Y58 (proton donor) is an active-site residue. A substrate-binding site is contributed by 73-75 (GSA).

It belongs to the PanD family. As to quaternary structure, heterooctamer of four alpha and four beta subunits. Requires pyruvate as cofactor. In terms of processing, is synthesized initially as an inactive proenzyme, which is activated by self-cleavage at a specific serine bond to produce a beta-subunit with a hydroxyl group at its C-terminus and an alpha-subunit with a pyruvoyl group at its N-terminus.

It localises to the cytoplasm. It carries out the reaction L-aspartate + H(+) = beta-alanine + CO2. It functions in the pathway cofactor biosynthesis; (R)-pantothenate biosynthesis; beta-alanine from L-aspartate: step 1/1. Functionally, catalyzes the pyruvoyl-dependent decarboxylation of aspartate to produce beta-alanine. This is Aspartate 1-decarboxylase 2 from Polaromonas sp. (strain JS666 / ATCC BAA-500).